The primary structure comprises 222 residues: Transmembrane reductase CYB561D2 (222 aa).

The Cytoplasmic segment spans residues 2-17 (ALSAETESHIYRALRT). The region spanning 14 to 217 (ALRTASGAAA…NQVSNAYLYR (204 aa)) is the Cytochrome b561 domain. Residues 18 to 38 (ASGAAAHLVALGFTIFVAVLA) form a helical membrane-spanning segment. At 39–46 (RPGSSLFS) the chain is on the lumenal side. Residues 47 to 67 (WHPVLMSLAFSFLMTEALLVF) traverse the membrane as a helical segment. A heme b-binding site is contributed by H48. Residues 68–85 (SPESSLLHSLSRKGRARC) are Cytoplasmic-facing. H86 and H120 together coordinate heme b. The helical transmembrane segment at 86 to 106 (HWVLQLLALLCALLGLGLVIL) threads the bilayer. The Lumenal portion of the chain corresponds to 107-122 (HKEQLGKAHLVTRHGQ). Residues 123 to 143 (AGLLAVLWAGLQCSGGVGLLY) traverse the membrane as a helical segment. At 144–162 (PKLLPRWPLAKLKLYHATS) the chain is on the cytoplasmic side. Position 159 (H159) interacts with heme b. A helical membrane pass occupies residues 163-183 (GLVGYLLGSASLLLGMCSLWF). Residues 184-186 (TAS) lie on the Lumenal side of the membrane. Residues 187 to 207 (VTGAAWYLAVLCPVLTSLVIM) traverse the membrane as a helical segment. Topologically, residues 208–222 (NQVSNAYLYRKRIQP) are cytoplasmic.

Heme b is required as a cofactor.

It localises to the endoplasmic reticulum membrane. Its subcellular location is the cytoplasmic vesicle membrane. The catalysed reaction is monodehydro-L-ascorbate radical(out) + L-ascorbate(in) = monodehydro-L-ascorbate radical(in) + L-ascorbate(out). It catalyses the reaction Fe(3+)(out) + L-ascorbate(in) = monodehydro-L-ascorbate radical(in) + Fe(2+)(out) + H(+). Functionally, transmembrane reductase that may use ascorbate as an electron donor in the cytoplasm and transfer electrons across endoplasmic reticulum membranes to reduce monodehydro-L-ascorbate radical and iron cations Fe(3+) in the lumen of that compartment. In Homo sapiens (Human), this protein is Transmembrane reductase CYB561D2.